Reading from the N-terminus, the 133-residue chain is Small ribosomal subunit protein uS8 (133 aa).

This sequence belongs to the universal ribosomal protein uS8 family. In terms of assembly, part of the 30S ribosomal subunit.

Its function is as follows. One of the primary rRNA binding proteins, it binds directly to 16S rRNA central domain where it helps coordinate assembly of the platform of the 30S subunit. The protein is Small ribosomal subunit protein uS8 of Ignicoccus hospitalis (strain KIN4/I / DSM 18386 / JCM 14125).